The sequence spans 45 residues: Photosystem II reaction center protein K (45 aa).

A propeptide spanning residues 1–8 is cleaved from the precursor; it reads MFSINFLG. A helical membrane pass occupies residues 17 to 37; it reads FDPIVDVLPIIPLLFLLLAFV.

It belongs to the PsbK family. PSII is composed of 1 copy each of membrane proteins PsbA, PsbB, PsbC, PsbD, PsbE, PsbF, PsbH, PsbI, PsbJ, PsbK, PsbL, PsbM, PsbT, PsbY, PsbZ, Psb30/Ycf12, at least 3 peripheral proteins of the oxygen-evolving complex and a large number of cofactors. It forms dimeric complexes.

The protein resides in the plastid. Its subcellular location is the chloroplast thylakoid membrane. Its function is as follows. One of the components of the core complex of photosystem II (PSII). PSII is a light-driven water:plastoquinone oxidoreductase that uses light energy to abstract electrons from H(2)O, generating O(2) and a proton gradient subsequently used for ATP formation. It consists of a core antenna complex that captures photons, and an electron transfer chain that converts photonic excitation into a charge separation. In Euglena viridis (Cercaria viridis), this protein is Photosystem II reaction center protein K.